A 179-amino-acid chain; its full sequence is uncharacterized protein (179 aa).

A disordered region spans residues 53-82 (SPEREDPESPTRGVDEVDGACSEPPTPRPE). Basic and acidic residues predominate over residues 54–67 (PEREDPESPTRGVD).

This is an uncharacterized protein from Ictaluridae (bullhead catfishes).